The following is a 324-amino-acid chain: tRNA N6-adenosine threonylcarbamoyltransferase (324 aa).

Histidine 107, histidine 111, and tyrosine 127 together coordinate Fe cation. Substrate-binding positions include 127–131 (YVSGG), aspartate 159, glycine 172, glutamate 176, and asparagine 257. Residue aspartate 285 participates in Fe cation binding.

This sequence belongs to the KAE1 / TsaD family. In terms of assembly, monomer. Component of the KEOPS complex that consists of Kae1, Bud32, Cgi121 and Pcc1; the whole complex dimerizes. Fe(2+) serves as cofactor.

It is found in the cytoplasm. The catalysed reaction is L-threonylcarbamoyladenylate + adenosine(37) in tRNA = N(6)-L-threonylcarbamoyladenosine(37) in tRNA + AMP + H(+). Required for the formation of a threonylcarbamoyl group on adenosine at position 37 (t(6)A37) in tRNAs that read codons beginning with adenine. Is a component of the KEOPS complex that is probably involved in the transfer of the threonylcarbamoyl moiety of threonylcarbamoyl-AMP (TC-AMP) to the N6 group of A37. Kae1 likely plays a direct catalytic role in this reaction, but requires other protein(s) of the complex to fulfill this activity. This is tRNA N6-adenosine threonylcarbamoyltransferase from Thermococcus sibiricus (strain DSM 12597 / MM 739).